The following is a 92-amino-acid chain: Putative lambdoid prophage defective integrase (92 aa).

Belongs to the 'phage' integrase family.

The sequence is that of Putative lambdoid prophage defective integrase (intG) from Escherichia coli O157:H7.